Consider the following 447-residue polypeptide: Trigger factor (447 aa).

The 88-residue stretch at 174 to 261 (GDIAVLGFKG…LKDLKTRELP (88 aa)) folds into the PPIase FKBP-type domain.

It belongs to the FKBP-type PPIase family. Tig subfamily.

It localises to the cytoplasm. The enzyme catalyses [protein]-peptidylproline (omega=180) = [protein]-peptidylproline (omega=0). Its function is as follows. Involved in protein export. Acts as a chaperone by maintaining the newly synthesized protein in an open conformation. Functions as a peptidyl-prolyl cis-trans isomerase. The chain is Trigger factor from Synechococcus sp. (strain CC9902).